Reading from the N-terminus, the 379-residue chain is Homoserine O-succinyltransferase (379 aa).

The region spanning 51 to 360 (NAVLICHALS…DSPYGHDAFL (310 aa)) is the AB hydrolase-1 domain. Residue serine 157 is the Nucleophile of the active site. A substrate-binding site is contributed by arginine 227. Catalysis depends on residues aspartate 323 and histidine 356. A substrate-binding site is contributed by aspartate 357.

Belongs to the AB hydrolase superfamily. MetX family. Homodimer.

The protein resides in the cytoplasm. It catalyses the reaction L-homoserine + succinyl-CoA = O-succinyl-L-homoserine + CoA. It functions in the pathway amino-acid biosynthesis; L-methionine biosynthesis via de novo pathway; O-succinyl-L-homoserine from L-homoserine: step 1/1. Functionally, transfers a succinyl group from succinyl-CoA to L-homoserine, forming succinyl-L-homoserine. The chain is Homoserine O-succinyltransferase from Pseudomonas putida (strain W619).